A 1292-amino-acid chain; its full sequence is Zinc finger protein 423 (1292 aa).

A compositionally biased stretch (basic residues) spans 1-11; sequence MSRRKQAKPRS. 3 disordered regions span residues 1-21, 33-70, and 95-125; these read MSRR…EASD, AGGL…EDVE, and AHRC…SPTQ. The segment covering 41-54 has biased composition (basic and acidic residues); the sequence is ECDRKTSRALEDRN. Serine 55 and serine 58 each carry phosphoserine. A C2H2-type 1; degenerate zinc finger spans residues 75-101; the sequence is YTCDHCQQDFESLADLTDHRAHRCPGD. Over residues 110-125 the composition is skewed to polar residues; sequence WVASSPSSKDVASPTQ. 7 C2H2-type zinc fingers span residues 146–168, 174–196, 202–224, 230–252, 271–294, 303–326, and 331–353; these read YPCQ…EQIH, FKCT…IKLH, YHCH…LKTH, FKCS…MQAH, FMCD…LTLH, LQCI…HQAH, and HKCP…LDSH. The segment at 354 to 407 is disordered; that stretch reads RQPDSSNHSVSPDPVLGSVASMSSATPDSSASVERGSTPDSTLKPLRGQKKMRD. Over residues 371 to 385 the composition is skewed to low complexity; it reads SVASMSSATPDSSAS. The C2H2-type 9; degenerate zinc-finger motif lies at 417 to 441; the sequence is YSCPYCSKRDFTSLAVLEIHLKTIH. 3 consecutive C2H2-type zinc fingers follow at residues 449–472, 488–511, and 525–548; these read HTCQ…RKLH, FHCN…RVSH, and FFCN…QQAH. A C2H2-type 13; atypical zinc finger spans residues 571 to 596; it reads YSCPYCTNSPIFGSILKLTKHIKENH. Residues 598-635 are disordered; that stretch reads NIPLAHSKKSKAEQSPVSSDVEVSSPKRQRLSGSANSI. Serine 612 is modified (phosphoserine). The span at 612–623 shows a compositional bias: low complexity; that stretch reads SPVSSDVEVSSP. 7 C2H2-type zinc fingers span residues 640 to 662, 670 to 692, 700 to 723, 728 to 751, 758 to 781, 789 to 811, and 815 to 838; these read YPCN…LKLH, QACP…LTVH, YVCE…LDMH, YHCT…AVKH, YRCT…KHSH, HKCI…ITTH, and YNCR…REKH. Residues 894-916 form a C2H2-type 21; degenerate zinc finger; the sequence is YGCDICGAAYTMEVLLQNHRLRD. C2H2-type zinc fingers lie at residues 938–960, 967–989, and 1028–1050; these read HKCN…LQTH, YMCP…KVTH, and FRCV…GTFH. Serine 1062 carries the phosphoserine modification. A C2H2-type 25; degenerate zinc finger spans residues 1072 to 1090; sequence YKCALCLKEFRSKQDLVRL. 5 consecutive C2H2-type zinc fingers follow at residues 1128–1151, 1176–1198, 1206–1228, 1237–1260, and 1267–1290; these read LRCP…QVDH, YQCI…VANH, HECK…LIEH, FKCP…FAVH, and YDCS…MSQH. Positions 1144–1155 are enriched in basic and acidic residues; the sequence is ESHMQVDHRDLT. The disordered stretch occupies residues 1144–1171; the sequence is ESHMQVDHRDLTPETSGPRKGAQTSPVP.

The protein belongs to the krueppel C2H2-type zinc-finger protein family. As to quaternary structure, homodimer. Interacts with SMAD1 and SMAD4. Interacts with EBF1. Interacts with PARP1. Interacts with CEP290. In terms of tissue distribution, within the cerebellum, Zfp423 is expressed in both ventricular and external germinal zones. Transiently expressed in newly differentiating olfactory-receptor neurons.

The protein resides in the nucleus. Transcription factor that can both act as an activator or a repressor depending on the context. Plays a central role in BMP signaling and olfactory neurogenesis. Associates with SMADs in response to BMP2 leading to activate transcription of BMP target genes. Acts as a transcriptional repressor via its interaction with EBF1, a transcription factor involved in terminal olfactory receptor neurons differentiation; this interaction preventing EBF1 to bind DNA and activate olfactory-specific genes. Involved in olfactory neurogenesis by participating in a developmental switch that regulates the transition from differentiation to maturation in olfactory receptor neurons. Controls proliferation and differentiation of neural precursors in cerebellar vermis formation. In Mus musculus (Mouse), this protein is Zinc finger protein 423 (Znf423).